Consider the following 571-residue polypeptide: RNA polymerase sigma factor SigA (571 aa).

Positions 321-391 (MVESNLRLVI…TRAIADQART (71 aa)) are sigma-70 factor domain-2. Residues 345–348 (DLIQ) carry the Interaction with polymerase core subunit RpoC motif. Residues 400-476 (ETINKVLRGA…DTAVESPAEA (77 aa)) form a sigma-70 factor domain-3 region. The interval 489-542 (VLKTLTDRERFVLIHRFGLLDGRPKTLEEVGSAFNVTRERIRQIEAKALRKMRH) is sigma-70 factor domain-4. The segment at residues 515–534 (LEEVGSAFNVTRERIRQIEA) is a DNA-binding region (H-T-H motif).

It belongs to the sigma-70 factor family. RpoD/SigA subfamily. Interacts transiently with the RNA polymerase catalytic core.

The protein resides in the cytoplasm. In terms of biological role, sigma factors are initiation factors that promote the attachment of RNA polymerase to specific initiation sites and are then released. This sigma factor is the primary sigma factor during exponential growth. This is RNA polymerase sigma factor SigA from Chlamydia muridarum (strain MoPn / Nigg).